We begin with the raw amino-acid sequence, 309 residues long: Dermonecrotic toxin LarSicTox-alphaIB2bi (309 aa).

A signal peptide is located at residue Val-1. Positions 2–27 (RATEKFAPIYFFCHPLQSAETDVAER) are excised as a propeptide. Residue His-38 is part of the active site. Mg(2+) is bound by residues Glu-58 and Asp-60. His-74 (nucleophile) is an active-site residue. Intrachain disulfides connect Cys-78-Cys-84 and Cys-80-Cys-223. Asp-118 is a binding site for Mg(2+). Residue Asn-286 is glycosylated (N-linked (GlcNAc...) asparagine).

This sequence belongs to the arthropod phospholipase D family. Class II subfamily. Mg(2+) serves as cofactor. Expressed by the venom gland.

It localises to the secreted. It catalyses the reaction an N-(acyl)-sphingosylphosphocholine = an N-(acyl)-sphingosyl-1,3-cyclic phosphate + choline. The enzyme catalyses N-hexanoyl-sphing-4-enine-1-phosphocholine = N-(hexanoyl)-sphing-4-enine-1,3-cyclic phosphate + choline. The catalysed reaction is N-(dodecanoyl)-sphing-4-enine-1-phosphocholine = N-dodecanoyl-sphing-4-enine-1,3-cyclic phosphate + choline. It carries out the reaction a 1-acyl-sn-glycero-3-phosphocholine = a 1-acyl-sn-glycero-2,3-cyclic phosphate + choline. It catalyses the reaction 1-tetradecanoyl-sn-glycero-3-phosphocholine = 1-tetradecanoyl-sn-glycero-2,3-cyclic phosphate + choline. The enzyme catalyses 1-octanoyl-sn-glycero-3-phosphocholine = 1-octanoyl-sn-glycero-2,3-cyclic phosphate + choline. The catalysed reaction is 1-hexadecanoyl-sn-glycero-3-phosphocholine = 1-hexadecanoyl-sn-glycero-2,3-cyclic phosphate + choline. It carries out the reaction an N-(acyl)-sphingosylphosphoethanolamine = an N-(acyl)-sphingosyl-1,3-cyclic phosphate + ethanolamine. It catalyses the reaction N-dodecanoyl-heptadecasphing-4-enine-1-phosphoethanolamine = N-dodecanoyl-heptadecasphing-4-enine-1,3-cyclic phosphate + ethanolamine. Functionally, dermonecrotic toxins cleave the phosphodiester linkage between the phosphate and headgroup of certain phospholipids (sphingolipid and lysolipid substrates), forming an alcohol (often choline) and a cyclic phosphate. This toxin acts on sphingomyelin (SM) with high activity and on lysophosphatidylcholine (LPC) and ceramide phosphoethanolamine (CPE) with low activity. In vivo, shows potent insecticidal activities. On mammals, induces dermonecrosis, hemolysis, increased vascular permeability, edema, inflammatory response, and platelet aggregation. The chain is Dermonecrotic toxin LarSicTox-alphaIB2bi from Loxosceles arizonica (Arizona brown spider).